An 806-amino-acid chain; its full sequence is MLFNGTTKYRDYAIVISLFFLLNVYLLYNTAQHTQVGNSKHISSDSGEKTSNPLPSCEITDDLAKSAISRAITPSCKAKLQLEACQLKNGTFTINFPENQCPNHDSRLIDQRIGCFLDKKEARVLTEFEYKLPKSNGKATCRKHCYKAGFLYFGLEFGHECFCGNDVSNATAVDDVECRAYKCPGNENSEEFCGGFNAVEIFRTGFRSKVNHRKPTYLPPSSDSIKNPVKILFLLQLNGRNERQVKRFLKSIYLPHHYYYIHVDARQNYMFSEMQKVADFLDNIHITERRFSTIWGGASLLQMFLQVIRDSMKIEKFKDWDYIINFSESDFPILPISDFERLITVNNGKSFLASHGYNTGKFIQKQGFEYVFSECDNRMFRIGKREFPQNLRIDGGSDWVGIHRNLAEFSISDEELPRKLRKTYESILLPLESFYHTLAFNSEFCDDLLMSNLRLTNWYRKQGCRCASLKPIVDWCGCSPLVFREETMKKFELQKAISKPTYFARKFDSMVDIDSIEAAEMQSISPEKLQLNHPTYHFAFANIFKTGIDEQKLHFESLANFALKSTETRAKFRKVLRIDALRAHHNALIEIVMKIETTDGATFEFLIHRLSHVNLTENEEKLVEHGYLLRAVSFGTKFEWKEELCREYMGFVTDNDTLHTRLQWHPTEHVKKVGDKTSPEMIFKYRKGDELIEQTVVKPYDSVFGGQFDSWNVGKKLSNLTTCSNFFVDIISPSSPDDAPPLATLHFPVYTDQNAHCHVDYLRQFFKIADFCTSGDACKEKIWSTSYPDPKSDIFVGYDEDTQTLI.

Residues 1 to 11 (MLFNGTTKYRD) are Cytoplasmic-facing. Residues 12–32 (YAIVISLFFLLNVYLLYNTAQ) traverse the membrane as a helical; Signal-anchor for type II membrane protein segment. Residues 33-806 (HTQVGNSKHI…GYDEDTQTLI (774 aa)) are Lumenal-facing. Cys57 and Cys85 are oxidised to a cystine. 2 N-linked (GlcNAc...) asparagine glycosylation sites follow: Asn89 and Asn169. Cystine bridges form between Cys101/Cys445, Cys464/Cys478, and Cys466/Cys476. A WSC domain is found at 109 to 205 (IDQRIGCFLD…FNAVEIFRTG (97 aa)). UDP-alpha-D-xylose contacts are provided by residues Asp264 and 293 to 295 (TIW). An N-linked (GlcNAc...) asparagine glycan is attached at Asn325. Position 398-399 (398-399 (DW)) interacts with UDP-alpha-D-xylose. UDP-alpha-D-xylose contacts are provided by residues Ser479 and 505-506 (RK). N-linked (GlcNAc...) asparagine glycans are attached at residues Asn614, Asn655, and Asn719. A disulfide bridge connects residues Cys772 and Cys778.

This sequence belongs to the glycosyltransferase 14 family. XylT subfamily. It depends on a divalent metal cation as a cofactor.

It is found in the endoplasmic reticulum membrane. It localises to the golgi apparatus membrane. It catalyses the reaction UDP-alpha-D-xylose + L-seryl-[protein] = 3-O-(beta-D-xylosyl)-L-seryl-[protein] + UDP + H(+). Its pathway is glycan metabolism; chondroitin sulfate biosynthesis. The protein operates within glycan metabolism; heparan sulfate biosynthesis. Catalyzes the first step in biosynthesis of glycosaminoglycan. Transfers D-xylose from UDP-D-xylose to specific serine residues of the core protein. Required for vulval morphogenesis and zygotic cytokinesis, suggesting that glycosaminoglycans play a central role in vulval morphogenesis. The polypeptide is Xylosyltransferase sqv-6 (Caenorhabditis elegans).